A 339-amino-acid chain; its full sequence is tRNA-dihydrouridine(20/20a) synthase (339 aa).

FMN-binding positions include 26-28 (PML) and Q78. C108 functions as the Proton donor in the catalytic mechanism. Residues K147, H180, 220–222 (NGG), and 242–243 (GR) each bind FMN.

This sequence belongs to the Dus family. DusA subfamily. FMN serves as cofactor.

The catalysed reaction is 5,6-dihydrouridine(20) in tRNA + NADP(+) = uridine(20) in tRNA + NADPH + H(+). It carries out the reaction 5,6-dihydrouridine(20) in tRNA + NAD(+) = uridine(20) in tRNA + NADH + H(+). The enzyme catalyses 5,6-dihydrouridine(20a) in tRNA + NADP(+) = uridine(20a) in tRNA + NADPH + H(+). It catalyses the reaction 5,6-dihydrouridine(20a) in tRNA + NAD(+) = uridine(20a) in tRNA + NADH + H(+). In terms of biological role, catalyzes the synthesis of 5,6-dihydrouridine (D), a modified base found in the D-loop of most tRNAs, via the reduction of the C5-C6 double bond in target uridines. Specifically modifies U20 and U20a in tRNAs. This chain is tRNA-dihydrouridine(20/20a) synthase, found in Shigella flexneri.